The sequence spans 2221 residues: Autophagy-related protein 2 (2221 aa).

Disordered stretches follow at residues 108-135 (RHAGQGDRPMGSGPGHDSASDPIIPNPT), 148-181 (EEREELKAAISSQSQVLHRTSTSGSDDEEELGYG), 288-327 (FTAPTSPESTSPESPLQPKPSPPPSHVSSPPSEHASEEDT), 502-537 (PQPCADNQTSPVTSVPPSEASSSSSTSGSFNQDELS), 575-606 (PESTVVRDSHAHMHHENGRDVQHMDPDHEDDD), 629-648 (DDSPEAHRDPTDKELSRSSS), 672-758 (SMDE…RRSP), 963-996 (SSASSGKGPKKEAPKRPRGVHFEEFPPPAASERT), 1297-1318 (QPPHHDVQLPEKGGRSDTPSKP), and 1495-1514 (DMPEPPETTDSPDQNQGAGH). Polar residues predominate over residues 157-171 (ISSQSQVLHRTSTSG). Low complexity predominate over residues 291–301 (PTSPESTSPES). The segment covering 302–312 (PLQPKPSPPPS) has biased composition (pro residues). Low complexity predominate over residues 510–530 (TSPVTSVPPSEASSSSSTSGS). 2 stretches are compositionally biased toward basic and acidic residues: residues 579 to 600 (VVRDSHAHMHHENGRDVQHMDP) and 632 to 644 (PEAHRDPTDKELS). A compositionally biased stretch (polar residues) spans 741 to 756 (GSSQPSQSDGQAQSRR). Composition is skewed to basic and acidic residues over residues 971 to 986 (PKKEAPKRPRGVHFEE) and 1298 to 1311 (PPHHDVQLPEKGGR). Residues 1502 to 1511 (TTDSPDQNQG) are compositionally biased toward polar residues.

This sequence belongs to the ATG2 family.

Its subcellular location is the preautophagosomal structure membrane. The protein resides in the endoplasmic reticulum membrane. The catalysed reaction is a 1,2-diacyl-sn-glycero-3-phosphocholine(in) = a 1,2-diacyl-sn-glycero-3-phosphocholine(out). It catalyses the reaction a 1,2-diacyl-sn-glycero-3-phospho-L-serine(in) = a 1,2-diacyl-sn-glycero-3-phospho-L-serine(out). It carries out the reaction a 1,2-diacyl-sn-glycero-3-phosphoethanolamine(in) = a 1,2-diacyl-sn-glycero-3-phosphoethanolamine(out). Functionally, lipid transfer protein required for autophagosome completion and peroxisome degradation. Tethers the edge of the isolation membrane (IM) to the endoplasmic reticulum (ER) and mediates direct lipid transfer from ER to IM for IM expansion. Atg2 binds to the ER exit site (ERES), which is the membrane source for autophagosome formation, using basic residues in its N-terminal region (NR) and to the expanding edge of the IM through its C-terminal region. The latter binding is assisted by an atg18-PtdIns3P interaction. Atg2 then extracts phospholipids from the membrane source using its NR and transfers them to atg9 to the IM through its predicted beta-sheet-rich structure for membrane expansion. The protein is Autophagy-related protein 2 (atg2) of Aspergillus niger (strain ATCC MYA-4892 / CBS 513.88 / FGSC A1513).